A 3859-amino-acid chain; its full sequence is Transformation/transcription domain-associated protein (3859 aa).

Residue Ala-2 is modified to N-acetylalanine. Pro residues predominate over residues 491 to 526 (PAAPGPAPSPAPVPAPPPPPPPPPPATPVTPAPVPP). Residues 491–541 (PAAPGPAPSPAPVPAPPPPPPPPPPATPVTPAPVPPFEKQGEKDKEDKQTF) form a disordered region. A compositionally biased stretch (basic and acidic residues) spans 529–539 (KQGEKDKEDKQ). Position 1628 is a phosphoserine (Ser-1628). Positions 2010-2388 (SEVVIKWELQ…SPMAANQTPT (379 aa)) are interaction with TP53. The segment at 2023 to 2044 (DQQPDSDMDPNSSGEGVNSVSS) is disordered. Residues 2033 to 2044 (NSSGEGVNSVSS) show a composition bias toward low complexity. A Bipartite nuclear localization signal motif is present at residues 2047–2062 (KRGLSVDSAQEVKRFR). Phosphoserine occurs at positions 2051 and 2077. Residue Lys-2543 forms a Glycyl lysine isopeptide (Lys-Gly) (interchain with G-Cter in SUMO2) linkage. The segment covering 2543 to 2554 (KQEPRERENSES) has biased composition (basic and acidic residues). The tract at residues 2543–2578 (KQEPRERENSESKEEDVEIDIELAPGDQTSTPKTKE) is disordered. In terms of domain architecture, FAT spans 2692 to 3275 (VLKYLGKTHN…YFPIRTLYLT (584 aa)). Lys-3078 bears the N6-acetyllysine mark. Positions 3500–3823 (MPRVEIVQKH…AVTAIMTRLH (324 aa)) constitute a PI3K/PI4K catalytic domain. The interval 3506-3512 (VQKHNTA) is G-loop. The interval 3687-3695 (HLNRLNPEM) is catalytic loop. The interval 3707–3732 (VAYFRFDINDATGDLDANRPVPFRLT) is activation loop. An FATC domain is found at 3827-3859 (QFEGGESKVNTLVAAANSLDNLCRMDPAWHPWL).

It belongs to the PI3/PI4-kinase family. TRA1 subfamily. In terms of assembly, interacts with MYC, E2F1 and E2F4 transcription factors. Interacts directly with p53/TP53. Interacts with GCN5L2. Component of various HAT complexes. Component of the PCAF complex, at least composed of TADA2L/ADA2, SUPT3H, TADA3L/ADA3, TAF5L/PAF65-beta, TAF6L/PAF65-alpha, TAF10/TAFII30, TAF12/TAFII20, TAF9/TAFII31 and TRRAP. Component of the TFTC-HAT complex, at least composed of TAF5L, TAF6L, TADA3L, SUPT3H/SPT3, TAF2/TAFII150, TAF4/TAFII135, TAF5/TAFII100, GCN5L2/GCN5, TAF10 and TRRAP. Component of the NuA4 histone acetyltransferase complex which contains the catalytic subunit KAT5/TIP60 and the subunits EP400, TRRAP/PAF400, BRD8/SMAP, EPC1, DMAP1/DNMAP1, RUVBL1/TIP49, RUVBL2, ING3, actin, ACTL6A/BAF53A, MORF4L1/MRG15, MORF4L2/MRGX, MRGBP, YEATS4/GAS41, VPS72/YL1 and MEAF6. Component of the STAGA complex, at least composed of SUPT3H, GCN5L2, SUPT7L, TAF5L, TAF6L, TADA3L, TAD1L, TAF10, TAF12, TRRAP and TAF9. The STAGA core complex is associated with a subcomplex required for histone deubiquitination composed of ATXN7L3, ENY2 and USP22. Component of the BAF53 complex, at least composed of BAF53A, RUVBL1, SMARCA4/BRG1, and TRRAP, which preferentially acetylates histone H4 (and H2A) within nucleosomes. Interacts with NPAT. Interaction with TELO2 and TTI1. Component of a SWR1-like complex.

The protein resides in the nucleus. Functionally, adapter protein, which is found in various multiprotein chromatin complexes with histone acetyltransferase activity (HAT), which gives a specific tag for epigenetic transcription activation. Component of the NuA4 histone acetyltransferase complex which is responsible for acetylation of nucleosomal histones H4 and H2A. Plays a central role in MYC transcription activation, and also participates in cell transformation by MYC. Required for p53/TP53-, E2F1- and E2F4-mediated transcription activation. Also involved in transcription activation mediated by the adenovirus E1A, a viral oncoprotein that deregulates transcription of key genes. Probably acts by linking transcription factors such as E1A, MYC or E2F1 to HAT complexes such as STAGA thereby allowing transcription activation. Probably not required in the steps following histone acetylation in processes of transcription activation. May be required for the mitotic checkpoint and normal cell cycle progression. Component of a SWR1-like complex that specifically mediates the removal of histone H2A.Z/H2AZ1 from the nucleosome. May play a role in the formation and maintenance of the auditory system. The sequence is that of Transformation/transcription domain-associated protein (TRRAP) from Homo sapiens (Human).